The sequence spans 292 residues: Undecaprenyl-diphosphatase (292 aa).

The next 7 membrane-spanning stretches (helical) occupy residues 1–21, 46–66, 88–108, 114–134, 192–212, 225–245, and 253–273; these read MSLVSAALFGLVQALTEFLPV, FVTIIQAGTTLAVLIYFRADI, ARLGWYILLGTLPAALAGKLL, ALGNWVIAGSLVGLGLVLLAA, FLLSVPITLAAGAYKLWSTVP, VVGTVVSAVAGYLVIDWLLAW, and VFVVWRIAAGAAIAALILSGV.

This sequence belongs to the UppP family.

It is found in the cell inner membrane. The enzyme catalyses di-trans,octa-cis-undecaprenyl diphosphate + H2O = di-trans,octa-cis-undecaprenyl phosphate + phosphate + H(+). Catalyzes the dephosphorylation of undecaprenyl diphosphate (UPP). Confers resistance to bacitracin. The chain is Undecaprenyl-diphosphatase from Anaeromyxobacter dehalogenans (strain 2CP-C).